The sequence spans 122 residues: Large ribosomal subunit protein uL14c (122 aa).

Belongs to the universal ribosomal protein uL14 family. In terms of assembly, part of the 50S ribosomal subunit.

The protein resides in the plastid. It localises to the chloroplast. Its function is as follows. Binds to 23S rRNA. In Buxus microphylla (Littleleaf boxwood), this protein is Large ribosomal subunit protein uL14c.